Consider the following 99-residue polypeptide: Large ribosomal subunit protein bL21 (99 aa).

It belongs to the bacterial ribosomal protein bL21 family. In terms of assembly, part of the 50S ribosomal subunit. Contacts protein L20.

In terms of biological role, this protein binds to 23S rRNA in the presence of protein L20. This chain is Large ribosomal subunit protein bL21, found in Mycoplasmopsis agalactiae (strain NCTC 10123 / CIP 59.7 / PG2) (Mycoplasma agalactiae).